A 342-amino-acid polypeptide reads, in one-letter code: Nicotinate-nucleotide--dimethylbenzimidazole phosphoribosyltransferase (342 aa).

The active-site Proton acceptor is the E311.

Belongs to the CobT family.

The enzyme catalyses 5,6-dimethylbenzimidazole + nicotinate beta-D-ribonucleotide = alpha-ribazole 5'-phosphate + nicotinate + H(+). It participates in nucleoside biosynthesis; alpha-ribazole biosynthesis; alpha-ribazole from 5,6-dimethylbenzimidazole: step 1/2. In terms of biological role, catalyzes the synthesis of alpha-ribazole-5'-phosphate from nicotinate mononucleotide (NAMN) and 5,6-dimethylbenzimidazole (DMB). The sequence is that of Nicotinate-nucleotide--dimethylbenzimidazole phosphoribosyltransferase from Shewanella sediminis (strain HAW-EB3).